We begin with the raw amino-acid sequence, 590 residues long: Leucine-rich repeat transmembrane neuronal protein 4 (590 aa).

The first 30 residues, 1–30 (MGFHLITQLKGMSVVLVLLPTLLLVMLTGA), serve as a signal peptide directing secretion. The LRRNT domain occupies 31-61 (QRACPKNCRCDGKIVYCESHAFADIPENISG). The Extracellular segment spans residues 31–424 (QRACPKNCRC…QEYEHVSFHK (394 aa)). The N-linked (GlcNAc...) asparagine glycan is linked to Asn58. LRR repeat units follow at residues 62-83 (GSQG…QFAG), 86-107 (QLIW…AFQG), 110-131 (RLKE…TFHP), 134-155 (NLRN…QFKG), 158-179 (KLII…VFQD), 182-203 (NLDF…AFAG), 206-226 (KLKE…AHFP), 230-251 (NLRS…LTWT), 254-275 (SLHN…TFKC), and 278-299 (NLQK…TVNA). Residue Asn126 is glycosylated (N-linked (GlcNAc...) asparagine). Residue Asn291 is glycosylated (N-linked (GlcNAc...) asparagine). An LRRCT domain is found at 311–362 (NMWECSRSICPLFYWLKNFKGNKESTMICAGPKHIQGEKVSDAVETYNICSE). A helical membrane pass occupies residues 425 to 445 (IIAGSVALFLSVAMILLVIYV). The Cytoplasmic segment spans residues 446–590 (SWKRYPASMK…PAIYLERIAN (145 aa)).

It belongs to the LRRTM family. Peripherally associated with AMPAR complex. AMPAR complex consists of an inner core made of 4 pore-forming GluA/GRIA proteins (GRIA1, GRIA2, GRIA3 and GRIA4) and 4 major auxiliary subunits arranged in a twofold symmetry. One of the two pairs of distinct binding sites is occupied either by CNIH2, CNIH3 or CACNG2, CACNG3. The other harbors CACNG2, CACNG3, CACNG4, CACNG8 or GSG1L. This inner core of AMPAR complex is complemented by outer core constituents binding directly to the GluA/GRIA proteins at sites distinct from the interaction sites of the inner core constituents. Outer core constituents include at least PRRT1, PRRT2, CKAMP44/SHISA9, FRRS1L and NRN1. The proteins of the inner and outer core serve as a platform for other, more peripherally associated AMPAR constituents, including LRRTM4. Alone or in combination, these auxiliary subunits control the gating and pharmacology of the AMPAR complex and profoundly impact their biogenesis and protein processing. As to expression, expressed in neuronal tissues.

The protein resides in the cell membrane. Its subcellular location is the postsynaptic cell membrane. Functionally, may play a role in the development and maintenance of the vertebrate nervous system. Exhibits strong synaptogenic activity, restricted to excitatory presynaptic differentiation. The protein is Leucine-rich repeat transmembrane neuronal protein 4 (LRRTM4) of Homo sapiens (Human).